Consider the following 339-residue polypeptide: Tetraacyldisaccharide 4'-kinase (339 aa).

Residue 58-65 (TVGGSGKT) coordinates ATP.

The protein belongs to the LpxK family.

It catalyses the reaction a lipid A disaccharide + ATP = a lipid IVA + ADP + H(+). Its pathway is glycolipid biosynthesis; lipid IV(A) biosynthesis; lipid IV(A) from (3R)-3-hydroxytetradecanoyl-[acyl-carrier-protein] and UDP-N-acetyl-alpha-D-glucosamine: step 6/6. Functionally, transfers the gamma-phosphate of ATP to the 4'-position of a tetraacyldisaccharide 1-phosphate intermediate (termed DS-1-P) to form tetraacyldisaccharide 1,4'-bis-phosphate (lipid IVA). In Shewanella baltica (strain OS195), this protein is Tetraacyldisaccharide 4'-kinase.